The following is a 231-amino-acid chain: Ion-translocating oxidoreductase complex subunit E (231 aa).

6 helical membrane passes run 18 to 38 (GLVQLLGLCPLLAVTATLTNA), 39 to 59 (LGLGLATMLVLIGSNILVSLV), 69 to 89 (IPVFVMIIAALVTSVQLFINA), 93 to 113 (GLYLSLGIFLPLIVTNCVIIG), 127 to 147 (STFDGLMMGLGFTLVLCVLGA), and 182 to 202 (TFLLAMLPPGAFIGMGLLIAL).

This sequence belongs to the NqrDE/RnfAE family. In terms of assembly, the complex is composed of six subunits: RnfA, RnfB, RnfC, RnfD, RnfE and RnfG.

The protein localises to the cell inner membrane. In terms of biological role, part of a membrane-bound complex that couples electron transfer with translocation of ions across the membrane. The chain is Ion-translocating oxidoreductase complex subunit E from Shewanella piezotolerans (strain WP3 / JCM 13877).